The following is a 121-amino-acid chain: Small ribosomal subunit protein uS13 (121 aa).

Residues 95 to 121 form a disordered region; it reads LPVRGQNTKNNARTRKGKAVAIAGKKK. The span at 106–121 shows a compositional bias: basic residues; that stretch reads ARTRKGKAVAIAGKKK.

The protein belongs to the universal ribosomal protein uS13 family. In terms of assembly, part of the 30S ribosomal subunit. Forms a loose heterodimer with protein S19. Forms two bridges to the 50S subunit in the 70S ribosome.

Functionally, located at the top of the head of the 30S subunit, it contacts several helices of the 16S rRNA. In the 70S ribosome it contacts the 23S rRNA (bridge B1a) and protein L5 of the 50S subunit (bridge B1b), connecting the 2 subunits; these bridges are implicated in subunit movement. Contacts the tRNAs in the A and P-sites. The chain is Small ribosomal subunit protein uS13 from Streptococcus equi subsp. zooepidemicus (strain H70).